The chain runs to 528 residues: GMP synthase [glutamine-hydrolyzing] (528 aa).

A Glutamine amidotransferase type-1 domain is found at 13–204 (AIVILDFGSQ…VNHICGCEQD (192 aa)). The active-site Nucleophile is the cysteine 90. Residues histidine 178 and glutamate 180 contribute to the active site. One can recognise a GMPS ATP-PPase domain in the interval 205-403 (WTTNAFIDEA…LGLPEEIVRR (199 aa)). 232–238 (SGGVDSS) lines the ATP pocket.

Homodimer.

It carries out the reaction XMP + L-glutamine + ATP + H2O = GMP + L-glutamate + AMP + diphosphate + 2 H(+). The protein operates within purine metabolism; GMP biosynthesis; GMP from XMP (L-Gln route): step 1/1. Catalyzes the synthesis of GMP from XMP. This Synechococcus sp. (strain CC9902) protein is GMP synthase [glutamine-hydrolyzing].